Here is a 273-residue protein sequence, read N- to C-terminus: Glutamate 5-kinase (273 aa).

Lysine 15 provides a ligand contact to ATP. 3 residues coordinate substrate: serine 55, aspartate 142, and asparagine 158. Residues 178–179 (SD) and 220–226 (TGGMLSK) contribute to the ATP site.

The protein belongs to the glutamate 5-kinase family.

The protein localises to the cytoplasm. It catalyses the reaction L-glutamate + ATP = L-glutamyl 5-phosphate + ADP. It functions in the pathway amino-acid biosynthesis; L-proline biosynthesis; L-glutamate 5-semialdehyde from L-glutamate: step 1/2. Catalyzes the transfer of a phosphate group to glutamate to form L-glutamate 5-phosphate. In Streptococcus pyogenes serotype M18 (strain MGAS8232), this protein is Glutamate 5-kinase.